A 93-amino-acid polypeptide reads, in one-letter code: Alpha-conotoxin-like Ms20.1 (93 aa).

An N-terminal signal peptide occupies residues 1–23 (MLKLEMMLVVLLILPLFYFDAGG). The propeptide occupies 24-45 (QVVQRDWRSDGLARYLQRGDRD). 4-carboxyglutamate is present on Glu-48. Position 54 is a 4-hydroxyproline (Pro-54). 4 disulfide bridges follow: Cys-62-Cys-71, Cys-67-Cys-79, Cys-72-Cys-89, and Cys-77-Cys-91.

This sequence belongs to the conotoxin D superfamily. In terms of assembly, hetero-, homo- or pseudo-homodimer (identical sequence, different post-translational modifications). Heterodimer of [carboxyGlu-48, hydroxyPro-54]Ms20.1 and [carboxy'Glu-50', hydroxy'Pro-56']Ms20.4 may exist. In terms of tissue distribution, expressed by the venom duct.

The protein localises to the secreted. Its function is as follows. Alpha-conotoxins act on postsynaptic membranes, they bind to the nicotinic acetylcholine receptors (nAChR) and thus inhibit them. Through its two C-terminal domains, this homodimeric protein would bind to two nAChR allosteric sites, located outside the nAChR C-loop of the principal binding face and at the adjacent binding interface in a clockwise direction. This toxin specifically blocks mammalian neuronal nAChR of the alpha-7/CHRNA7, alpha-3-beta-2/CHRNA3-CHRNB2 and alpha-4-beta-2/CHRNA4-CHRNB2 subtypes. This chain is Alpha-conotoxin-like Ms20.1, found in Conus mustelinus (Weasel cone).